A 61-amino-acid chain; its full sequence is Large ribosomal subunit protein uL30 (61 aa).

Belongs to the universal ribosomal protein uL30 family. Part of the 50S ribosomal subunit.

This is Large ribosomal subunit protein uL30 from Exiguobacterium sibiricum (strain DSM 17290 / CCUG 55495 / CIP 109462 / JCM 13490 / 255-15).